The chain runs to 638 residues: Homeobox protein 10 (638 aa).

3 disordered regions span residues 23-55, 76-139, and 195-219; these read ETQP…LNTN, TDEN…VNTN, and IANE…EEAK. 2 stretches are compositionally biased toward low complexity: residues 24-55 and 80-139; these read TQPT…LNTN and NTSV…VNTN. Positions 205 to 214 are enriched in polar residues; that stretch reads EPQTNSNVNG. A DNA-binding region (homeobox) is located at residues 301–360; the sequence is NKKKRQRTSPEQLAILEQIFETDKMPSQQIRVRLANQLGMSSRRVQIWFQNKRAKVKRGG. Disordered regions lie at residues 381 to 431 and 448 to 638; these read EDED…TSSD and SSSS…IVKN. Composition is skewed to low complexity over residues 388–411, 419–430, and 462–501; these read SLTI…NNNG, LSSSPTNLNTSS, and NNTN…TTTT. 2 stretches are compositionally biased toward polar residues: residues 502–522 and 545–573; these read SSSP…NKLT and SLNS…TDKQ. The span at 575–625 shows a compositional bias: low complexity; the sequence is NSDFSNFNNNNNNNNNNNNNNNNNNNINNNGNNNSNNNDSNNNNNKSNFSD.

The protein localises to the nucleus. Its function is as follows. Putative transcription factor. This Dictyostelium discoideum (Social amoeba) protein is Homeobox protein 10 (hbx10).